The sequence spans 392 residues: Chalcone synthase-like protein 1 (392 aa).

The active site involves Cys-166.

Belongs to the thiolase-like superfamily. Chalcone/stilbene synthases family. Expressed at the same level in leaves and in glandular trichomes.

The protein localises to the cytoplasm. Its function is as follows. Chalcone synthase that may use malonyl-CoA and hexanoyl-CoA as substrates but without producing olivetol or olivetolic acid. This is Chalcone synthase-like protein 1 (CAN383) from Cannabis sativa (Hemp).